Here is a 92-residue protein sequence, read N- to C-terminus: Small ribosomal subunit protein uS19c (92 aa).

Belongs to the universal ribosomal protein uS19 family.

Its subcellular location is the plastid. It is found in the chloroplast. Functionally, protein S19 forms a complex with S13 that binds strongly to the 16S ribosomal RNA. The sequence is that of Small ribosomal subunit protein uS19c from Nymphaea alba (White water-lily).